Reading from the N-terminus, the 194-residue chain is Ras-related protein RabU (194 aa).

19-27 contacts GTP; that stretch reads GYDYECGIK. The Effector region signature appears at 42-50; sequence PESQVGVDF. Residues 68-72 and 130-133 contribute to the GTP site; these read PQNKY and NNSE.

It belongs to the small GTPase superfamily. Rab family.

The polypeptide is Ras-related protein RabU (rabU) (Dictyostelium discoideum (Social amoeba)).